Reading from the N-terminus, the 314-residue chain is Methylglutaconyl-CoA hydratase, mitochondrial (314 aa).

The transit peptide at 1-42 (MAAAAPGALGALRTGRVRLVAACCARLGPAAWARGTAPRRGY) directs the protein to the mitochondrion. Lys75 bears the N6-acetyllysine; alternate mark. Residue Lys75 is modified to N6-succinyllysine; alternate. Positions 80-94 (KNLLKMLSKAVDALK) are RNA-binding. An N6-succinyllysine modification is found at Lys84. An N6-acetyllysine; alternate mark is found at Lys88 and Lys119. An N6-succinyllysine; alternate mark is found at Lys88 and Lys119. N6-succinyllysine is present on residues Lys123 and Lys135. 2 positions are modified to N6-acetyllysine; alternate: Lys179 and Lys186. Residues Lys179 and Lys186 each carry the N6-succinyllysine; alternate modification. Position 304 is an N6-succinyllysine (Lys304).

It belongs to the enoyl-CoA hydratase/isomerase family. As to quaternary structure, homohexamer. As to expression, detected in heart, brain, liver, spleen, skeletal muscle and kidney. Expressed in brain, kidney, liver and spleen tissue (at protein level).

It is found in the mitochondrion. It carries out the reaction (3S)-3-hydroxy-3-methylglutaryl-CoA = 3-methyl-(2E)-glutaconyl-CoA + H2O. It catalyses the reaction (3S)-citramalyl-CoA = itaconyl-CoA + H2O. The catalysed reaction is 3-hydroxyisovaleryl-CoA = 3-methylbut-2-enoyl-CoA + H2O. The enzyme catalyses (S)-3-hydroxyglutaryl-CoA = (2E)-glutaconyl-CoA + H2O. It participates in amino-acid degradation; L-leucine degradation; (S)-3-hydroxy-3-methylglutaryl-CoA from 3-isovaleryl-CoA: step 3/3. Catalyzes the fifth step in the leucine degradation pathway, the reversible hydration of 3-methylglutaconyl-CoA (3-MG-CoA) to 3-hydroxy-3-methylglutaryl-CoA (HMG-CoA). Can catalyze the reverse reaction but at a much lower rate in vitro. HMG-CoA is then quickly degraded by another enzyme (such as HMG-CoA lyase) to give acetyl-CoA and acetoacetate. Uses other substrates such as (2E)-glutaconyl-CoA efficiently in vitro, and to a lesser extent 3-methylcrotonyl-CoA (3-methyl-(2E)-butenoyl-CoA), crotonyl-CoA ((2E)-butenoyl-CoA) and 3-hydroxybutanoyl-CoA (the missing carboxylate reduces affinity to the active site). Originally it was identified as an RNA-binding protein as it binds to AU-rich elements (AREs) in vitro. AREs direct rapid RNA degradation and mRNA deadenylation. Might have itaconyl-CoA hydratase activity, converting itaconyl-CoA into citramalyl-CoA in the C5-dicarboxylate catabolism pathway. The C5-dicarboxylate catabolism pathway is required to detoxify itaconate, an antimicrobial metabolite and immunomodulator produced by macrophages during certain infections, that can act as a vitamin B12-poisoning metabolite. The chain is Methylglutaconyl-CoA hydratase, mitochondrial (Auh) from Mus musculus (Mouse).